The primary structure comprises 417 residues: Serine hydroxymethyltransferase (417 aa).

Position 54 is an N6-acetyllysine (Lys54). (6S)-5,6,7,8-tetrahydrofolate contacts are provided by residues Leu121 and 125–127; that span reads GHL. N6-(pyridoxal phosphate)lysine is present on Lys229. 3 positions are modified to N6-acetyllysine: Lys250, Lys285, and Lys354. Residue 355–357 coordinates (6S)-5,6,7,8-tetrahydrofolate; sequence SPF. Lys375 carries the N6-acetyllysine modification.

The protein belongs to the SHMT family. As to quaternary structure, homodimer. Pyridoxal 5'-phosphate serves as cofactor.

Its subcellular location is the cytoplasm. It carries out the reaction (6R)-5,10-methylene-5,6,7,8-tetrahydrofolate + glycine + H2O = (6S)-5,6,7,8-tetrahydrofolate + L-serine. The protein operates within one-carbon metabolism; tetrahydrofolate interconversion. It functions in the pathway amino-acid biosynthesis; glycine biosynthesis; glycine from L-serine: step 1/1. In terms of biological role, catalyzes the reversible interconversion of serine and glycine with tetrahydrofolate (THF) serving as the one-carbon carrier. This reaction serves as the major source of one-carbon groups required for the biosynthesis of purines, thymidylate, methionine, and other important biomolecules. Also exhibits THF-independent aldolase activity toward beta-hydroxyamino acids, producing glycine and aldehydes, via a retro-aldol mechanism. The chain is Serine hydroxymethyltransferase from Escherichia coli O157:H7.